A 346-amino-acid chain; its full sequence is MGVTELGKLIGKDIRREVKLENLAGKCIALDAYNSLYQFLASIRQPDGTPLMDRVGRITSHLSGLFYRTINLMEAGIKPVYVFDGKPPEFKLAEIEERRKVKEKAMEEVLKAIKEGRKEDVAKYMKRAVFLTSDMVEDAKKLLTYMGVPWVQAPSEGEAQAAHMAKRGHCWAVGSQDYDSLLFGSPRLVRNLAVSPRRKIGEEVIELSPEIIELDAVLKSLRLKNREQLIDLAILLGTDYNPDGVPGVGPQKALKLVWEFGGLEKMLETVLRGVYFPVDPLEIKKFFLNPPVTDEYSTDIKKPDEQKLIDFLVREHDFSEDRVLKAVERLKRAQTKYKISSLDSFF.

The segment at 1 to 102 (MGVTELGKLI…AEIEERRKVK (102 aa)) is N-domain. Mg(2+) contacts are provided by aspartate 31, aspartate 84, glutamate 156, glutamate 158, aspartate 177, aspartate 179, and aspartate 239. The tract at residues 120–261 (DVAKYMKRAV…KALKLVWEFG (142 aa)) is I-domain.

It belongs to the XPG/RAD2 endonuclease family. FEN1 subfamily. Interacts with PCNA. PCNA stimulates the nuclease activity without altering cleavage specificity. It depends on Mg(2+) as a cofactor.

Structure-specific nuclease with 5'-flap endonuclease and 5'-3' exonuclease activities involved in DNA replication and repair. During DNA replication, cleaves the 5'-overhanging flap structure that is generated by displacement synthesis when DNA polymerase encounters the 5'-end of a downstream Okazaki fragment. Binds the unpaired 3'-DNA end and kinks the DNA to facilitate 5' cleavage specificity. Cleaves one nucleotide into the double-stranded DNA from the junction in flap DNA, leaving a nick for ligation. Also involved in the base excision repair (BER) pathway. Acts as a genome stabilization factor that prevents flaps from equilibrating into structures that lead to duplications and deletions. Also possesses 5'-3' exonuclease activity on nicked or gapped double-stranded DNA. This is Flap endonuclease 1 from Pyrobaculum islandicum (strain DSM 4184 / JCM 9189 / GEO3).